A 3938-amino-acid chain; its full sequence is Protein bassoon (3938 aa).

Positions 1 to 158 (MGNEASLEGG…PTSPYSVPQI (158 aa)) are disordered. Glycine 2 carries N-myristoyl glycine lipidation. The span at 9-29 (GGAGEGPLPPGGSGLGPGPGA) shows a compositional bias: gly residues. The segment covering 31–61 (KPPSALAGGGQLPVAGAARAAGPPTPGLGLV) has biased composition (low complexity). Residues 62–70 (PGPGPGPGP) are 4 X 2 AA tandem repeats of P-G. 2 stretches are compositionally biased toward polar residues: residues 86–98 (QRAT…QASA) and 127–154 (QVDS…SPYS). Phosphoserine is present on serine 142. An Omega-N-methylarginine modification is found at arginine 145. C4-type zinc fingers lie at residues 167–190 (CPIC…CTQC) and 195–217 (CNQC…CLNC). Disordered regions lie at residues 228–346 (TTAP…LTGK) and 361–456 (LMSV…KTMP). The segment covering 230–240 (APRSKSQQQLH) has biased composition (polar residues). A phosphoserine mark is found at serine 241 and serine 245. Over residues 361-376 (LMSVQPEADTQGQPSP) the composition is skewed to polar residues. The segment covering 394 to 406 (PRPPGSGPGPGPT) has biased composition (pro residues). 2 C4-type zinc fingers span residues 462 to 485 (CPLC…CTAC) and 490 to 512 (CTLC…CLNC). 4 disordered regions span residues 523–921 (GEPA…LQGG), 934–1247 (GRLW…TPAG), 1294–1541 (MDPM…WQQS), and 1561–1611 (RMVH…RAPS). The segment covering 526-539 (APLPLPTPQEPPAG) has biased composition (pro residues). A compositionally biased stretch (low complexity) spans 548–589 (SPLKQKGPQGPGQPSGSLPPKASPQAAKASPQAAKASPQAKP). 3 tandem repeats follow at residues 568–574 (KASPQAA), 575–581 (KASPQAA), and 582–588 (KASPQAK). Residues 568 to 588 (KASPQAAKASPQAAKASPQAK) are 3 X 7 AA tandem repeats of K-A-S-P-Q-A-[AK]. Over residues 616–629 (VPKPPPETAVPPGT) the composition is skewed to pro residues. Positions 668–677 (QDLSRSPQSL) are enriched in polar residues. Residues 678–692 (SDTGYSSDGVSSSQS) are compositionally biased toward low complexity. Residues 693 to 702 (EITGVVQQEV) are compositionally biased toward polar residues. 2 stretches are compositionally biased toward acidic residues: residues 769–784 (FDSD…EDDS) and 847–858 (SAEEDNLEEDDT). The residue at position 863 (arginine 863) is an Omega-N-methylarginine. Serine 965 carries the phosphoserine modification. Residues 979 to 996 (PASTPSYTSGTSPTSLSS) show a composition bias toward low complexity. A coiled-coil region spans residues 1032 to 1087 (IEDSSEEEELREEEELLREQEKMREVEQQRIRSTARKTRRDKEELRAQRRRERSKT). The span at 1034 to 1047 (DSSEEEELREEEEL) shows a compositional bias: acidic residues. Residues serine 1035 and serine 1036 each carry the phosphoserine modification. A compositionally biased stretch (basic and acidic residues) spans 1048–1061 (LREQEKMREVEQQR). At serine 1085 the chain carries Phosphoserine. Threonine 1087 is subject to Phosphothreonine. Phosphoserine is present on residues serine 1093 and serine 1099. A compositionally biased stretch (basic and acidic residues) spans 1102 to 1117 (EELRQAAEMEELHRSS). Composition is skewed to low complexity over residues 1118 to 1128 (CSEYSPSPSLD) and 1158 to 1175 (SPTE…SGRP). Residues 1176 to 1203 (LKSAEEAYEDMMRKAELLQRQQGQAAGA) adopt a coiled-coil conformation. Residues 1177-1192 (KSAEEAYEDMMRKAEL) are compositionally biased toward basic and acidic residues. Residues 1194 to 1204 (QRQQGQAAGAR) show a composition bias toward low complexity. Residues 1211-1224 (SQPTGPRSQGSFEY) are compositionally biased toward polar residues. Position 1221 is a phosphoserine (serine 1221). Residues 1318–1328 (SFPTSTSSDSS) are compositionally biased toward low complexity. An O-linked (GlcNAc) threonine glycan is attached at threonine 1339. Residues 1342–1351 (FAKEPQEPLK) are compositionally biased toward basic and acidic residues. 2 stretches are compositionally biased toward low complexity: residues 1352–1364 (LHSS…LASK) and 1374–1386 (PGTP…APCP). Threonine 1380 is a glycosylation site (O-linked (GlcNAc) threonine). Over residues 1402–1426 (SPSTSSTIHSYGQPPTTANYGSQTE) the composition is skewed to polar residues. 3 positions are modified to phosphoserine: serine 1470, serine 1479, and serine 1481. Residues 1476 to 1487 (STPSESPTFSPS) show a composition bias toward low complexity. 2 stretches are compositionally biased toward polar residues: residues 1496 to 1510 (EFST…SSDI) and 1561 to 1597 (RMVH…SQMP). Omega-N-methylarginine occurs at positions 1780 and 1784. An Asymmetric dimethylarginine; alternate modification is found at arginine 1794. An Omega-N-methylarginine; alternate modification is found at arginine 1794. At arginine 1806 the chain carries Omega-N-methylarginine. The tract at residues 1914–1964 (PSAPDKSVTDAALPGQSSGPFYSPRDPEPPEPLTFRAQGVVGPGPHEEQRP) is disordered. Threonine 1922 carries O-linked (GlcNAc) threonine glycosylation. 2 positions are modified to phosphoserine: serine 1978 and serine 2034. 2 positions are modified to omega-N-methylarginine: arginine 2039 and arginine 2069. An asymmetric dimethylarginine mark is found at arginine 2243, arginine 2253, and arginine 2259. The segment at 2280-2305 (AAKASGAGGPPRPELPAGGAREEPLS) is disordered. Threonine 2307 is a glycosylation site (O-linked (GlcNAc) threonine). Disordered stretches follow at residues 2318-2343 (VAQA…SGVL) and 2461-2486 (EEQK…PPAA). Residues 2345-2470 (RPVMEKEEAS…EEQKQRQKAP (126 aa)) adopt a coiled-coil conformation. Threonine 2510 carries an O-linked (GlcNAc) threonine glycan. Residues 2513-2648 (PGQAREPVLH…HEASASSSAA (136 aa)) are disordered. Polar residues predominate over residues 2527–2537 (SSASDMSLQTE). Residue serine 2564 is modified to Phosphoserine. 2 positions are modified to phosphothreonine: threonine 2581 and threonine 2608. A compositionally biased stretch (basic and acidic residues) spans 2629–2641 (RHSDSGSDSKHEA). O-linked (GlcNAc) threonine glycosylation is present at threonine 2685. The tract at residues 2715 to 3263 (EPDGQAQGVA…GGVSGRPGKD (549 aa)) is interaction with DAO. Phosphoserine is present on residues serine 2796, serine 2845, and serine 2851. Residues 2839-2859 (TLQRSLSDPKPLSPTAEESAK) form a disordered region. Threonine 2930 is a glycosylation site (O-linked (GlcNAc) threonine). Residues 2933–2975 (SLLRELDRDLRLVEHESTKLRKKQAELDEEEKEIDAKLKYLEL) adopt a coiled-coil conformation. Residues 2934–2996 (LLRELDRDLR…DRVGRDYPPL (63 aa)) form a sufficient for binding to ERC2 region. Serine 3007 carries the post-translational modification Phosphoserine. A compositionally biased stretch (polar residues) spans 3055–3068 (TQYTAGSSGPTQNG). Disordered regions lie at residues 3055-3148 (TQYT…ADLE), 3162-3399 (AVTV…SRKF), 3414-3546 (QQRY…PRAH), and 3569-3910 (YHLG…VFSK). Positions 3184–3196 (EHGKAPEHPRGGD) are enriched in basic and acidic residues. Positions 3198-3222 (SSVSQSPAPTYPSDSHYTSLEQNVP) are enriched in polar residues. Serine 3286 is subject to Phosphoserine. A compositionally biased stretch (polar residues) spans 3304–3315 (ESNGRPASTHYY). Basic and acidic residues-rich tracts occupy residues 3316-3328 (SDSD…RADK), 3358-3377 (QGME…KDVE), and 3450-3469 (LSSH…RETA). Serine 3368 bears the Phosphoserine mark. At arginine 3488 the chain carries Omega-N-methylarginine. The span at 3506–3520 (PLGRPRPAGGALPPG) shows a compositional bias: low complexity. Basic and acidic residues-rich tracts occupy residues 3535–3546 (VQEHVKDGPRAH) and 3578–3588 (WFDKPRDARSD). Residues 3638-3651 (EHRHHGDHGRHSGR) show a composition bias toward basic residues. Basic and acidic residues predominate over residues 3652-3676 (HAGEEPGRRAARPHARDMGRHETRP). A compositionally biased stretch (low complexity) spans 3751–3820 (PQQSQPPSSR…ARLQQQSQPT (70 aa)). Positions 3772–3803 (QTQQQQQQQQQQQQQQQQQQQQQQQQGLGQQA) form a coiled coil. Arginine 3822 bears the Omega-N-methylarginine mark. Over residues 3834-3848 (KPQPGPTTAPGPQPA) the composition is skewed to pro residues. Low complexity-rich tracts occupy residues 3860–3887 (KPAA…KTGA) and 3894–3904 (GAPAGQPAAEG).

As to quaternary structure, interacts with PCLO, ERC2/CAST1, RIMS1 and UNC13A. Interacts with TPRG1L. Interacts with DYNLL1 and DYNLL2; these interactions potentially link PTVs to dynein and myosin V motor complexes. Interacts with ATG5; this interaction is important for the regulation of presynaptic autophagy. Interacts (via C-terminus) with TRIO (via N-terminus). Interacts with CTBP1. Interacts with SIAH1; this interaction negatively regulates SIAH1 E3 ligase activity. Interacts (via coiled region) with DAO; the interaction is direct. In terms of processing, myristoylated. The N-terminal myristoylation is not sufficient for presynaptic localization. In terms of tissue distribution, detected at synapses in the stratum lucidum in the hippocampus CA3 region (at protein level).

It is found in the cytoplasm. The protein resides in the presynaptic active zone. Its subcellular location is the cytoskeleton. The protein localises to the cytoplasmic vesicle. It localises to the secretory vesicle. It is found in the synaptic vesicle membrane. In terms of biological role, scaffold protein of the presynaptic cytomatrix at the active zone (CAZ) which is the place in the synapse where neurotransmitter is released. After synthesis, participates in the formation of Golgi-derived membranous organelles termed Piccolo-Bassoon transport vesicles (PTVs) that are transported along axons to sites of nascent synaptic contacts. At the presynaptic active zone, regulates the spatial organization of synaptic vesicle cluster, the protein complexes that execute membrane fusion and compensatory endocytosis. Also functions in processes other than assembly such as the regulation of specific presynaptic protein ubiquitination by interacting with SIAH1 or the regulation of presynaptic autophagy by associating with ATG5. Also mediates synapse to nucleus communication leading to reconfiguration of gene expression by associating with the transcriptional corepressor CTBP1 and by subsequently reducing the size of its pool available for nuclear import. Inhibits the activity of the proportion of DAO enzyme that localizes to the presynaptic active zone, which may modulate synaptic transmission. This Rattus norvegicus (Rat) protein is Protein bassoon.